The sequence spans 620 residues: Dihydroxy-acid dehydratase (620 aa).

Position 82 (D82) interacts with Mg(2+). C123 serves as a coordination point for [2Fe-2S] cluster. Mg(2+) is bound by residues D124 and K125. K125 carries the N6-carboxylysine modification. A [2Fe-2S] cluster-binding site is contributed by C197. E493 lines the Mg(2+) pocket. Residue S519 is the Proton acceptor of the active site.

Belongs to the IlvD/Edd family. Homodimer. [2Fe-2S] cluster serves as cofactor. It depends on Mg(2+) as a cofactor.

It catalyses the reaction (2R)-2,3-dihydroxy-3-methylbutanoate = 3-methyl-2-oxobutanoate + H2O. The catalysed reaction is (2R,3R)-2,3-dihydroxy-3-methylpentanoate = (S)-3-methyl-2-oxopentanoate + H2O. Its pathway is amino-acid biosynthesis; L-isoleucine biosynthesis; L-isoleucine from 2-oxobutanoate: step 3/4. It functions in the pathway amino-acid biosynthesis; L-valine biosynthesis; L-valine from pyruvate: step 3/4. Functions in the biosynthesis of branched-chain amino acids. Catalyzes the dehydration of (2R,3R)-2,3-dihydroxy-3-methylpentanoate (2,3-dihydroxy-3-methylvalerate) into 2-oxo-3-methylpentanoate (2-oxo-3-methylvalerate) and of (2R)-2,3-dihydroxy-3-methylbutanoate (2,3-dihydroxyisovalerate) into 2-oxo-3-methylbutanoate (2-oxoisovalerate), the penultimate precursor to L-isoleucine and L-valine, respectively. This chain is Dihydroxy-acid dehydratase, found in Bifidobacterium longum (strain NCC 2705).